The chain runs to 361 residues: Molybdopterin synthase catalytic subunit (361 aa).

Substrate-binding positions include 101-102, Lys117, and 124-126; these read HR and KKE.

This sequence belongs to the MoaE family. MOCS2B subfamily. As to quaternary structure, heterotetramer; composed of 2 small (Mocs2A) and 2 large (Mocs2B) subunits.

Its subcellular location is the cytoplasm. The enzyme catalyses 2 [molybdopterin-synthase sulfur-carrier protein]-C-terminal-Gly-aminoethanethioate + cyclic pyranopterin phosphate + H2O = molybdopterin + 2 [molybdopterin-synthase sulfur-carrier protein]-C-terminal Gly-Gly + 2 H(+). The protein operates within cofactor biosynthesis; molybdopterin biosynthesis. Catalytic subunit of the molybdopterin synthase complex, a complex that catalyzes the conversion of precursor Z into molybdopterin. Acts by mediating the incorporation of 2 sulfur atoms from thiocarboxylated Mocs2A into precursor Z to generate a dithiolene group. This chain is Molybdopterin synthase catalytic subunit, found in Drosophila persimilis (Fruit fly).